A 166-amino-acid polypeptide reads, in one-letter code: NAD(P)H-quinone oxidoreductase subunit I, chloroplastic (166 aa).

4Fe-4S ferredoxin-type domains lie at 55-84 (GRIH…VDWK) and 95-124 (LNYS…MTEE). [4Fe-4S] cluster contacts are provided by cysteine 64, cysteine 67, cysteine 70, cysteine 74, cysteine 104, cysteine 107, cysteine 110, and cysteine 114.

Belongs to the complex I 23 kDa subunit family. In terms of assembly, NDH is composed of at least 16 different subunits, 5 of which are encoded in the nucleus. [4Fe-4S] cluster is required as a cofactor.

It is found in the plastid. It localises to the chloroplast thylakoid membrane. It carries out the reaction a plastoquinone + NADH + (n+1) H(+)(in) = a plastoquinol + NAD(+) + n H(+)(out). The enzyme catalyses a plastoquinone + NADPH + (n+1) H(+)(in) = a plastoquinol + NADP(+) + n H(+)(out). NDH shuttles electrons from NAD(P)H:plastoquinone, via FMN and iron-sulfur (Fe-S) centers, to quinones in the photosynthetic chain and possibly in a chloroplast respiratory chain. The immediate electron acceptor for the enzyme in this species is believed to be plastoquinone. Couples the redox reaction to proton translocation, and thus conserves the redox energy in a proton gradient. The sequence is that of NAD(P)H-quinone oxidoreductase subunit I, chloroplastic from Hulsea algida (Pacific hulsea).